The primary structure comprises 130 residues: Small ribosomal subunit protein uS9 (130 aa).

The tract at residues 109 to 130 (RMKERKKYGLKKARRAPQFSKR) is disordered. Residues 111–130 (KERKKYGLKKARRAPQFSKR) show a composition bias toward basic residues.

It belongs to the universal ribosomal protein uS9 family.

This chain is Small ribosomal subunit protein uS9, found in Clostridium kluyveri (strain NBRC 12016).